We begin with the raw amino-acid sequence, 61 residues long: uncharacterized protein (61 aa).

The first 28 residues, 1-28 (MHRRARRMPMRPRRSKRVRNRYTMGTFA), serve as a signal peptide directing secretion.

This is an uncharacterized protein from Mycobacterium tuberculosis (strain ATCC 25618 / H37Rv).